A 533-amino-acid chain; its full sequence is CTP synthase (533 aa).

Positions 1–265 (MTKFIFVTGG…ARYLVRRLGL (265 aa)) are amidoligase domain. Ser13 contacts CTP. Ser13 lines the UTP pocket. 14–19 (GLGKGI) is a binding site for ATP. Tyr54 provides a ligand contact to L-glutamine. An ATP-binding site is contributed by Asp71. Residues Asp71 and Glu139 each coordinate Mg(2+). Residues 146–148 (DIE), 186–191 (KTKPTQ), and Lys222 each bind CTP. UTP is bound by residues 186–191 (KTKPTQ) and Lys222. A Glutamine amidotransferase type-1 domain is found at 290 to 532 (EIAIVGKYVK…VRAARERKYG (243 aa)). Residue Gly351 participates in L-glutamine binding. Catalysis depends on Cys378, which acts as the Nucleophile; for glutamine hydrolysis. L-glutamine-binding positions include 379–382 (FGFQ), Glu402, and Arg459. Residues His505 and Glu507 contribute to the active site.

The protein belongs to the CTP synthase family. As to quaternary structure, homotetramer.

It catalyses the reaction UTP + L-glutamine + ATP + H2O = CTP + L-glutamate + ADP + phosphate + 2 H(+). The catalysed reaction is L-glutamine + H2O = L-glutamate + NH4(+). The enzyme catalyses UTP + NH4(+) + ATP = CTP + ADP + phosphate + 2 H(+). Its pathway is pyrimidine metabolism; CTP biosynthesis via de novo pathway; CTP from UDP: step 2/2. With respect to regulation, allosterically activated by GTP, when glutamine is the substrate; GTP has no effect on the reaction when ammonia is the substrate. The allosteric effector GTP functions by stabilizing the protein conformation that binds the tetrahedral intermediate(s) formed during glutamine hydrolysis. Inhibited by the product CTP, via allosteric rather than competitive inhibition. Catalyzes the ATP-dependent amination of UTP to CTP with either L-glutamine or ammonia as the source of nitrogen. Regulates intracellular CTP levels through interactions with the four ribonucleotide triphosphates. The polypeptide is CTP synthase (Thermococcus gammatolerans (strain DSM 15229 / JCM 11827 / EJ3)).